The primary structure comprises 351 residues: UDP-N-acetylglucosamine--N-acetylmuramyl-(pentapeptide) pyrophosphoryl-undecaprenol N-acetylglucosamine transferase (351 aa).

UDP-N-acetyl-alpha-D-glucosamine contacts are provided by residues 13–15, asparagine 125, arginine 161, serine 189, isoleucine 241, 260–265, and glutamine 285; these read TGG and ALTVCE.

It belongs to the glycosyltransferase 28 family. MurG subfamily.

It is found in the cell inner membrane. The catalysed reaction is di-trans,octa-cis-undecaprenyl diphospho-N-acetyl-alpha-D-muramoyl-L-alanyl-D-glutamyl-meso-2,6-diaminopimeloyl-D-alanyl-D-alanine + UDP-N-acetyl-alpha-D-glucosamine = di-trans,octa-cis-undecaprenyl diphospho-[N-acetyl-alpha-D-glucosaminyl-(1-&gt;4)]-N-acetyl-alpha-D-muramoyl-L-alanyl-D-glutamyl-meso-2,6-diaminopimeloyl-D-alanyl-D-alanine + UDP + H(+). Its pathway is cell wall biogenesis; peptidoglycan biosynthesis. Functionally, cell wall formation. Catalyzes the transfer of a GlcNAc subunit on undecaprenyl-pyrophosphoryl-MurNAc-pentapeptide (lipid intermediate I) to form undecaprenyl-pyrophosphoryl-MurNAc-(pentapeptide)GlcNAc (lipid intermediate II). In Haemophilus influenzae (strain PittEE), this protein is UDP-N-acetylglucosamine--N-acetylmuramyl-(pentapeptide) pyrophosphoryl-undecaprenol N-acetylglucosamine transferase.